The primary structure comprises 324 residues: o-succinylbenzoate synthase (324 aa).

The active-site Proton donor is lysine 135. 3 residues coordinate Mg(2+): aspartate 163, glutamate 192, and aspartate 215. Lysine 237 acts as the Proton acceptor in catalysis.

It belongs to the mandelate racemase/muconate lactonizing enzyme family. MenC type 1 subfamily. It depends on a divalent metal cation as a cofactor.

It catalyses the reaction (1R,6R)-6-hydroxy-2-succinyl-cyclohexa-2,4-diene-1-carboxylate = 2-succinylbenzoate + H2O. The protein operates within quinol/quinone metabolism; 1,4-dihydroxy-2-naphthoate biosynthesis; 1,4-dihydroxy-2-naphthoate from chorismate: step 4/7. Its pathway is quinol/quinone metabolism; menaquinone biosynthesis. Converts 2-succinyl-6-hydroxy-2,4-cyclohexadiene-1-carboxylate (SHCHC) to 2-succinylbenzoate (OSB). In Aliivibrio salmonicida (strain LFI1238) (Vibrio salmonicida (strain LFI1238)), this protein is o-succinylbenzoate synthase.